A 374-amino-acid chain; its full sequence is Nucleosome assembly protein 1;3 (374 aa).

A coiled-coil region spans residues 26–80 (VNALKNKLQNLAGQHSDVLENLTPKIRRRVEVLREIQGKHDEIETKFREERAALE). Ser-41 bears the Phosphoserine mark. A Nuclear export signal motif is present at residues 47–62 (LTPKIRRRVEVLREIQ). The short motif at 222–227 (KKKPKK) is the Nuclear localization signal element. Positions 299 to 339 (IEGEEFEIDNDDEDDIDEDEDEDEEDEDEDEEEDDEDEEEE) are enriched in acidic residues. The tract at residues 299 to 374 (IEGEEFEIDN…GERPPECKQQ (76 aa)) is disordered. The segment covering 343-355 (TKKKPSVLHKKGG) has biased composition (basic residues). Residues 364 to 374 (QGERPPECKQQ) show a composition bias toward basic and acidic residues. A Cysteine methyl ester modification is found at Cys-371. Cys-371 carries the S-farnesyl cysteine lipid modification. Positions 372-374 (KQQ) are cleaved as a propeptide — removed in mature form.

It belongs to the nucleosome assembly protein (NAP) family. As to quaternary structure, can form homomeric and heteromeric protein complexes with NAP1;1, NAP1;2 and NAP1;4. Binds histone H2A and associates with chromatin in vivo. In terms of tissue distribution, ubiquitous.

Its subcellular location is the nucleus. It is found in the cytoplasm. In terms of biological role, may modulate chromatin structure by regulation of nucleosome assembly/disassembly. May function in nucleotide excision repair (NER). Involved in somatic homologous recombination. Could be involved in response to abscisic acid (ABA) and to salt stress. The polypeptide is Nucleosome assembly protein 1;3 (NAP1;3) (Arabidopsis thaliana (Mouse-ear cress)).